The following is a 393-amino-acid chain: Serine/threonine protein kinase AFUB_078980 (393 aa).

A Protein kinase domain is found at 61 to 390 (YQVLSKLGFG…APELLTDPWL (330 aa)). ATP is bound by residues 67–75 (LGFGANSTV) and Lys90. The active-site Proton acceptor is the Asp190.

It belongs to the protein kinase superfamily. CMGC Ser/Thr protein kinase family.

The catalysed reaction is L-seryl-[protein] + ATP = O-phospho-L-seryl-[protein] + ADP + H(+). The enzyme catalyses L-threonyl-[protein] + ATP = O-phospho-L-threonyl-[protein] + ADP + H(+). Functionally, serine/threonine protein kinase; part of the subtelomeric hrmA-associated cluster (HAC) containing genes that alter the hyphal surface (such as reduced total chitin or increased beta-glucan exposure) and perturb inter-hyphal interactions within the developing biofilms, resulting in a loss of vertically aligned polarized growing filaments. Consequently, this hypoxia-typic morphotype (called H-MORPH) with altered biofilm architecture leads to increased hypoxia fitness, increased host inflammation, rapid disease progression, and mortality in a murine model of invasive aspergillosis. The polypeptide is Serine/threonine protein kinase AFUB_078980 (Aspergillus fumigatus (strain CBS 144.89 / FGSC A1163 / CEA10) (Neosartorya fumigata)).